The primary structure comprises 186 residues: Adenine phosphoribosyltransferase (186 aa).

132 to 136 contacts AMP; it reads ATGGS.

Belongs to the purine/pyrimidine phosphoribosyltransferase family. Homodimer. Requires Mg(2+) as cofactor.

The protein localises to the cytoplasm. Its subcellular location is the nucleus. The catalysed reaction is AMP + diphosphate = 5-phospho-alpha-D-ribose 1-diphosphate + adenine. It functions in the pathway purine metabolism; AMP biosynthesis via salvage pathway; AMP from adenine: step 1/1. Its function is as follows. Catalyzes a salvage reaction resulting in the formation of AMP, that is energically less costly than de novo synthesis. This is Adenine phosphoribosyltransferase (APT1) from Debaryomyces hansenii (strain ATCC 36239 / CBS 767 / BCRC 21394 / JCM 1990 / NBRC 0083 / IGC 2968) (Yeast).